Reading from the N-terminus, the 160-residue chain is Crossover junction endodeoxyribonuclease RuvC (160 aa).

Catalysis depends on residues aspartate 7, glutamate 70, and aspartate 142. Positions 7, 70, and 142 each coordinate Mg(2+).

This sequence belongs to the RuvC family. In terms of assembly, homodimer which binds Holliday junction (HJ) DNA. The HJ becomes 2-fold symmetrical on binding to RuvC with unstacked arms; it has a different conformation from HJ DNA in complex with RuvA. In the full resolvosome a probable DNA-RuvA(4)-RuvB(12)-RuvC(2) complex forms which resolves the HJ. The cofactor is Mg(2+).

It localises to the cytoplasm. It carries out the reaction Endonucleolytic cleavage at a junction such as a reciprocal single-stranded crossover between two homologous DNA duplexes (Holliday junction).. The RuvA-RuvB-RuvC complex processes Holliday junction (HJ) DNA during genetic recombination and DNA repair. Endonuclease that resolves HJ intermediates. Cleaves cruciform DNA by making single-stranded nicks across the HJ at symmetrical positions within the homologous arms, yielding a 5'-phosphate and a 3'-hydroxyl group; requires a central core of homology in the junction. The consensus cleavage sequence is 5'-(A/T)TT(C/G)-3'. Cleavage occurs on the 3'-side of the TT dinucleotide at the point of strand exchange. HJ branch migration catalyzed by RuvA-RuvB allows RuvC to scan DNA until it finds its consensus sequence, where it cleaves and resolves the cruciform DNA. The sequence is that of Crossover junction endodeoxyribonuclease RuvC from Ehrlichia ruminantium (strain Gardel).